The sequence spans 428 residues: Serine--tRNA ligase (428 aa).

235-237 (TAE) contributes to the L-serine binding site. 266–268 (RSE) is an ATP binding site. Residue glutamate 289 coordinates L-serine. 353–356 (EISS) serves as a coordination point for ATP. Serine 389 serves as a coordination point for L-serine.

It belongs to the class-II aminoacyl-tRNA synthetase family. Type-1 seryl-tRNA synthetase subfamily. In terms of assembly, homodimer. The tRNA molecule binds across the dimer.

It localises to the cytoplasm. The enzyme catalyses tRNA(Ser) + L-serine + ATP = L-seryl-tRNA(Ser) + AMP + diphosphate + H(+). It carries out the reaction tRNA(Sec) + L-serine + ATP = L-seryl-tRNA(Sec) + AMP + diphosphate + H(+). The protein operates within aminoacyl-tRNA biosynthesis; selenocysteinyl-tRNA(Sec) biosynthesis; L-seryl-tRNA(Sec) from L-serine and tRNA(Sec): step 1/1. Catalyzes the attachment of serine to tRNA(Ser). Is also able to aminoacylate tRNA(Sec) with serine, to form the misacylated tRNA L-seryl-tRNA(Sec), which will be further converted into selenocysteinyl-tRNA(Sec). The protein is Serine--tRNA ligase of Shewanella baltica (strain OS185).